The primary structure comprises 267 residues: 4-hydroxy-2-oxo-heptane-1,7-dioate aldolase (267 aa).

The active-site Proton acceptor is the His-45. Substrate is bound at residue Gln-147. Glu-149 is a binding site for a divalent metal cation. Residues Ala-174 and Asp-175 each coordinate substrate. Asp-175 is an a divalent metal cation binding site.

This sequence belongs to the HpcH/HpaI aldolase family. In terms of assembly, homohexamer; trimer of dimers. It depends on a divalent metal cation as a cofactor.

It carries out the reaction 4-hydroxy-2-oxoheptanedioate = succinate semialdehyde + pyruvate. Its pathway is aromatic compound metabolism; 4-hydroxyphenylacetate degradation; pyruvate and succinate semialdehyde from 4-hydroxyphenylacetate: step 7/7. Catalyzes the reversible retro-aldol cleavage of 4-hydroxy-2-ketoheptane-1,7-dioate (HKHD) to pyruvate and succinic semialdehyde. This is 4-hydroxy-2-oxo-heptane-1,7-dioate aldolase from Shigella flexneri.